The chain runs to 342 residues: Peptide chain release factor 1 (342 aa).

Glutamine 211 bears the N5-methylglutamine mark. The disordered stretch occupies residues 262-282 (KEREISQKRKSQIGTGERSEK).

Belongs to the prokaryotic/mitochondrial release factor family. Methylated by PrmC. Methylation increases the termination efficiency of RF1.

It is found in the cytoplasm. Peptide chain release factor 1 directs the termination of translation in response to the peptide chain termination codons UAG and UAA. The chain is Peptide chain release factor 1 (prfA) from Thermotoga maritima (strain ATCC 43589 / DSM 3109 / JCM 10099 / NBRC 100826 / MSB8).